Consider the following 25-residue polypeptide: Chitinolytic alpha-amylase inhibitor PvCAI (25 aa).

Homodimer.

The catalysed reaction is Random endo-hydrolysis of N-acetyl-beta-D-glucosaminide (1-&gt;4)-beta-linkages in chitin and chitodextrins.. In terms of biological role, alpha-amylase inhibitor, active against Z.subfasciatus alpha-amylase (ZSA) but not porcine pancreatic alpha-amylase (PPA). Has chitinase activity. This Phaseolus vulgaris (Kidney bean) protein is Chitinolytic alpha-amylase inhibitor PvCAI.